Reading from the N-terminus, the 213-residue chain is Octanoyltransferase (213 aa).

One can recognise a BPL/LPL catalytic domain in the interval 27–209 (AATPDEVWLC…RLLAAMPEPA (183 aa)). Substrate-binding positions include 66–73 (RGGQVTYH), 140–142 (ALG), and 153–155 (GVA). The active-site Acyl-thioester intermediate is Cys-171.

This sequence belongs to the LipB family.

Its subcellular location is the cytoplasm. It carries out the reaction octanoyl-[ACP] + L-lysyl-[protein] = N(6)-octanoyl-L-lysyl-[protein] + holo-[ACP] + H(+). The protein operates within protein modification; protein lipoylation via endogenous pathway; protein N(6)-(lipoyl)lysine from octanoyl-[acyl-carrier-protein]: step 1/2. In terms of biological role, catalyzes the transfer of endogenously produced octanoic acid from octanoyl-acyl-carrier-protein onto the lipoyl domains of lipoate-dependent enzymes. Lipoyl-ACP can also act as a substrate although octanoyl-ACP is likely to be the physiological substrate. The polypeptide is Octanoyltransferase (Bordetella petrii (strain ATCC BAA-461 / DSM 12804 / CCUG 43448)).